Consider the following 681-residue polypeptide: Peroxisomal acyl-coenzyme A oxidase 2 (681 aa).

Ser-3 and Ser-9 each carry phosphoserine. 6 positions are modified to N6-succinyllysine: Lys-66, Lys-137, Lys-303, Lys-453, Lys-561, and Lys-667. The Microbody targeting signal signature appears at His-679–Met-681.

Belongs to the acyl-CoA oxidase family. As to quaternary structure, homodimer. The cofactor is FAD. In terms of tissue distribution, most abundant in liver. Also expressed in kidney. Not present in any other tissues tested.

The protein resides in the peroxisome. It catalyses the reaction (25R)-3alpha,7alpha,12alpha-trihydroxy-5beta-cholestan-26-oyl-CoA + A + H2O = (24R,25R)-3alpha,7alpha,12alpha,24-tetrahydroxy-5beta-cholestan-26-oyl-CoA + AH2. It carries out the reaction (25S)-3alpha,7alpha,12alpha-trihydroxy-5beta-cholestan-26-oyl-CoA + O2 = (24E)-3alpha,7alpha,12alpha-trihydroxy-5beta-cholest-24-en-26-oyl-CoA + H2O2. In terms of biological role, oxidizes the CoA esters of the bile acid intermediates di- and tri-hydroxycoprostanic acids. Capable of oxidizing short as well as long chain 2-methyl branched fatty acids. The protein is Peroxisomal acyl-coenzyme A oxidase 2 of Rattus norvegicus (Rat).